Reading from the N-terminus, the 89-residue chain is UPF0335 protein Nham_1221 (89 aa).

The protein belongs to the UPF0335 family.

The protein is UPF0335 protein Nham_1221 of Nitrobacter hamburgensis (strain DSM 10229 / NCIMB 13809 / X14).